A 333-amino-acid chain; its full sequence is Tryptophan--tRNA ligase (333 aa).

ATP-binding positions include 9-11 and 17-18; these read QPT and GN. The 'HIGH' region signature appears at 10–18; the sequence is PTNNLTLGN. Asp-140 serves as a coordination point for L-tryptophan. ATP is bound by residues 152–154, Ile-191, and 200–204; these read GQD and KMSKS. Residues 200–204 carry the 'KMSKS' region motif; sequence KMSKS.

This sequence belongs to the class-I aminoacyl-tRNA synthetase family. Homodimer.

The protein localises to the cytoplasm. The catalysed reaction is tRNA(Trp) + L-tryptophan + ATP = L-tryptophyl-tRNA(Trp) + AMP + diphosphate + H(+). Catalyzes the attachment of tryptophan to tRNA(Trp). The polypeptide is Tryptophan--tRNA ligase (Ureaplasma parvum serovar 3 (strain ATCC 700970)).